Reading from the N-terminus, the 274-residue chain is MTLQEEIIRQLGVKASIAPQEEIRKTVDFLKAYLRKHSFLKTYVLGISGGQDSTLAGKLAQMAIAELREETSDQAYQFIAVRLPYGVQADEADAQKALAFIMPDQTLTINIKAAVDGQVEALQAAGVEISDFNKGNIKARQRMISQYAIAGQMAGAVIGTDHAAENITGFFTKFGDGGADILPLFRLNKRQGKALLKVLGADAALYEKVPTADLEDQKPGLTDEVALGVTYQDIDDYLEGKLISKVAQATIEKWWHKGQHKRHLPITIFDDFWK.

46-53 (GISGGQDS) lines the ATP pocket. Mg(2+) is bound at residue Asp52. Deamido-NAD(+) is bound at residue Arg140. An ATP-binding site is contributed by Thr160. Glu165 contacts Mg(2+). The deamido-NAD(+) site is built by Lys173 and Asp180. ATP-binding residues include Lys189 and Thr211. 260–261 (HK) serves as a coordination point for deamido-NAD(+).

It belongs to the NAD synthetase family. In terms of assembly, homodimer.

The enzyme catalyses deamido-NAD(+) + NH4(+) + ATP = AMP + diphosphate + NAD(+) + H(+). It participates in cofactor biosynthesis; NAD(+) biosynthesis; NAD(+) from deamido-NAD(+) (ammonia route): step 1/1. Functionally, catalyzes the ATP-dependent amidation of deamido-NAD to form NAD. Uses ammonia as a nitrogen source. The chain is NH(3)-dependent NAD(+) synthetase from Streptococcus pyogenes serotype M2 (strain MGAS10270).